A 263-amino-acid chain; its full sequence is Acyl-[acyl-carrier-protein]--UDP-N-acetylglucosamine O-acyltransferase (263 aa).

It belongs to the transferase hexapeptide repeat family. LpxA subfamily. As to quaternary structure, homotrimer.

The protein localises to the cytoplasm. It carries out the reaction a (3R)-hydroxyacyl-[ACP] + UDP-N-acetyl-alpha-D-glucosamine = a UDP-3-O-[(3R)-3-hydroxyacyl]-N-acetyl-alpha-D-glucosamine + holo-[ACP]. Its pathway is glycolipid biosynthesis; lipid IV(A) biosynthesis; lipid IV(A) from (3R)-3-hydroxytetradecanoyl-[acyl-carrier-protein] and UDP-N-acetyl-alpha-D-glucosamine: step 1/6. Involved in the biosynthesis of lipid A, a phosphorylated glycolipid that anchors the lipopolysaccharide to the outer membrane of the cell. This chain is Acyl-[acyl-carrier-protein]--UDP-N-acetylglucosamine O-acyltransferase, found in Stenotrophomonas maltophilia (strain K279a).